The chain runs to 279 residues: MAIEKKFVQEGFKKAMVDEYFLEKLERAGYGGMEINRTPMGTQITLKAEKPGMIIGKAGKSIRRYTKEMDMRFKMDNPQIDVQEVKKPELNAQMMATRLANALERGWYFRKAGQSTLQRIMDSGAMGCEVIIAGKLTGARKRREKFIAGYIKHCGKPVEELVDVGYARAKKKLGIIGVKVRIMPPEAVLPDQITIEAAQAAAPAPAEKKSPAAGAEPAKEAAAVPAPAESTAAEVEKIIAESEAAEAVTPEGAEGDEKAAAAKKQPKKKVVKTDGDSQS.

In terms of domain architecture, KH type-2 spans 17–86; the sequence is VDEYFLEKLE…NPQIDVQEVK (70 aa). 2 stretches are compositionally biased toward low complexity: residues 206–233 and 241–252; these read AEKKSPAAGAEPAKEAAAVPAPAESTAA and ESEAAEAVTPEG. The interval 206-279 is disordered; sequence AEKKSPAAGA…VVKTDGDSQS (74 aa).

Belongs to the universal ribosomal protein uS3 family. In terms of assembly, part of the 30S ribosomal subunit.

Binds the lower part of the 30S subunit head. The polypeptide is Small ribosomal subunit protein uS3 (Methanocella arvoryzae (strain DSM 22066 / NBRC 105507 / MRE50)).